The chain runs to 598 residues: UvrABC system protein C (598 aa).

The GIY-YIG domain maps to 14–91; it reads DSPGCYLHKD…IQKNMPKYNI (78 aa). The UVR domain occupies 196 to 231; sequence DKIIEDLRSKMLAASKEMAFERAAEYRDLISGIATM.

This sequence belongs to the UvrC family. Interacts with UvrB in an incision complex.

It localises to the cytoplasm. Functionally, the UvrABC repair system catalyzes the recognition and processing of DNA lesions. UvrC both incises the 5' and 3' sides of the lesion. The N-terminal half is responsible for the 3' incision and the C-terminal half is responsible for the 5' incision. The sequence is that of UvrABC system protein C from Streptococcus pyogenes serotype M1.